A 505-amino-acid chain; its full sequence is Putative thymidine phosphorylase (505 aa).

It belongs to the thymidine/pyrimidine-nucleoside phosphorylase family. Type 2 subfamily.

The catalysed reaction is thymidine + phosphate = 2-deoxy-alpha-D-ribose 1-phosphate + thymine. The chain is Putative thymidine phosphorylase from Hahella chejuensis (strain KCTC 2396).